A 496-amino-acid polypeptide reads, in one-letter code: Aldehyde dehydrogenase (496 aa).

Active-site residues include Glu-263 and Cys-296.

Belongs to the aldehyde dehydrogenase family.

The protein localises to the cytoplasm. It catalyses the reaction an aldehyde + NAD(+) + H2O = a carboxylate + NADH + 2 H(+). In Davidiella tassiana (Mycosphaerella tassiana), this protein is Aldehyde dehydrogenase (CLAH10).